The sequence spans 222 residues: Charged multivesicular body protein 4a (222 aa).

Disordered regions lie at residues 1 to 21 and 180 to 211; these read MSGLGRLFGKGKKEKGPTPEE and VGDKEEEPSVKLPSVPSTHLPAGPAPKVDEDE. The interval 1-116 is interaction with phosphoinosides; the sequence is MSGLGRLFGK…ELAAQSMKKA (116 aa). The segment at 1-150 is intramolecular interaction with C-terminus; sequence MSGLGRLFGK…QISDAISRPM (150 aa). Coiled-coil stretches lie at residues 20–105 and 155–180; these read EEAI…VLRT and DVDEDELLEELEELEQEELAQELLNV. The intramolecular interaction with N-terminus stretch occupies residues 151–222; that stretch reads GFGDDVDEDE…ALKQLAEWVS (72 aa). Residue Ser-196 is modified to Phosphoserine.

Belongs to the SNF7 family. In terms of assembly, probable core component of the endosomal sorting required for transport complex III (ESCRT-III). ESCRT-III components are thought to multimerize to form a flat lattice on the perimeter membrane of the endosome. Several assembly forms of ESCRT-III may exist that interact and act sequentially. Self-associates; overexpression leads to the assembly of filaments that curve and associate to create circular rings. Interacts with CHMP2A. Interacts with CHMP3; the interaction requires the release of CHMP4A autoinhibition. Interacts with CHMP4B. Interacts with CHMP4C. Interacts with CHMP6. Interacts with VPS4A. Interacts with PDCD6IP; the interaction is direct. In terms of tissue distribution, widely expressed. Expressed at higher level in heart, kidney, liver and skeletal muscle. Also expressed in brain, placenta, lung and pancreas.

The protein localises to the cytoplasmic vesicle membrane. The protein resides in the late endosome membrane. In terms of biological role, probable core component of the endosomal sorting required for transport complex III (ESCRT-III) which is involved in multivesicular bodies (MVBs) formation and sorting of endosomal cargo proteins into MVBs. MVBs contain intraluminal vesicles (ILVs) that are generated by invagination and scission from the limiting membrane of the endosome and mostly are delivered to lysosomes enabling degradation of membrane proteins, such as stimulated growth factor receptors, lysosomal enzymes and lipids. The MVB pathway appears to require the sequential function of ESCRT-O, -I,-II and -III complexes. ESCRT-III proteins mostly dissociate from the invaginating membrane before the ILV is released. The ESCRT machinery also functions in topologically equivalent membrane fission events, such as the terminal stages of cytokinesis and the budding of enveloped viruses (HIV-1 and other lentiviruses). ESCRT-III proteins are believed to mediate the necessary vesicle extrusion and/or membrane fission activities, possibly in conjunction with the AAA ATPase VPS4. When overexpressed, membrane-assembled circular arrays of CHMP4A filaments can promote or stabilize negative curvature and outward budding. Via its interaction with PDCD6IP involved in HIV-1 p6- and p9-dependent virus release. CHMP4A/B/C are required for the exosomal release of SDCBP, CD63 and syndecan. The polypeptide is Charged multivesicular body protein 4a (CHMP4A) (Homo sapiens (Human)).